The sequence spans 220 residues: MIFTVPTVLEPSQLEQIRSILEKAEFVDGKLTAGWHAQLVKENQQLKSGQIQTQLTQTVKDALLKNALFQTAVRPRKIHSLLFSRYEVGMSYGTHIDNGLMGSNFWRSDVSFTLFLTAPKDYEGGELVIEGADDEKAYKLDLNSVLVYPSSTLHRVEPVTKGTRLVAVGWVQSLVRDASEREILFDLETARRAIFVQQGKTPEFDLISKSIANLLRKWAE.

Positions 77 to 173 (KIHSLLFSRY…RLVAVGWVQS (97 aa)) constitute a Fe2OG dioxygenase domain. Fe cation contacts are provided by His-95, Asp-97, and His-154. A 2-oxoglutarate-binding site is contributed by Arg-164.

Fe(2+) is required as a cofactor. The cofactor is L-ascorbate.

The polypeptide is PKHD-type hydroxylase PCC7424_1929 (Gloeothece citriformis (strain PCC 7424) (Cyanothece sp. (strain PCC 7424))).